A 301-amino-acid chain; its full sequence is Probable alpha-L-glutamate ligase (301 aa).

Residues Met-104–Glu-287 form the ATP-grasp domain. Residues Lys-141, Glu-178–Phe-179, Asp-187, and Arg-211–Asn-213 contribute to the ATP site. Mg(2+) is bound by residues Asp-248, Glu-260, and Asn-262. Residues Asp-248, Glu-260, and Asn-262 each coordinate Mn(2+).

Belongs to the RimK family. Mg(2+) is required as a cofactor. Requires Mn(2+) as cofactor.

This Aliivibrio salmonicida (strain LFI1238) (Vibrio salmonicida (strain LFI1238)) protein is Probable alpha-L-glutamate ligase.